Consider the following 216-residue polypeptide: Small ribosomal subunit protein uS4 (216 aa).

In terms of domain architecture, S4 RNA-binding spans arginine 111 to glutamate 175. The segment at valine 194–arginine 216 is disordered. Residues lysine 198 to glycine 208 show a composition bias toward basic and acidic residues.

Belongs to the universal ribosomal protein uS4 family. As to quaternary structure, part of the 30S ribosomal subunit. Contacts protein S5. The interaction surface between S4 and S5 is involved in control of translational fidelity.

Functionally, one of the primary rRNA binding proteins, it binds directly to 16S rRNA where it nucleates assembly of the body of the 30S subunit. In terms of biological role, with S5 and S12 plays an important role in translational accuracy. The chain is Small ribosomal subunit protein uS4 from Methanosarcina barkeri (strain Fusaro / DSM 804).